Reading from the N-terminus, the 347-residue chain is Protein RecA (347 aa).

Residue 65 to 72 (GPESSGKT) participates in ATP binding.

The protein belongs to the RecA family.

Its subcellular location is the cytoplasm. In terms of biological role, can catalyze the hydrolysis of ATP in the presence of single-stranded DNA, the ATP-dependent uptake of single-stranded DNA by duplex DNA, and the ATP-dependent hybridization of homologous single-stranded DNAs. It interacts with LexA causing its activation and leading to its autocatalytic cleavage. This is Protein RecA from Aliivibrio salmonicida (strain LFI1238) (Vibrio salmonicida (strain LFI1238)).